The chain runs to 199 residues: RNA-free ribonuclease P (199 aa).

The protein belongs to the HARP family.

The enzyme catalyses Endonucleolytic cleavage of RNA, removing 5'-extranucleotides from tRNA precursor.. Functionally, RNA-free RNase P that catalyzes the removal of the 5'-leader sequence from pre-tRNA to produce the mature 5'-terminus. This chain is RNA-free ribonuclease P, found in Thermococcus onnurineus (strain NA1).